The chain runs to 147 residues: Small ribosomal subunit protein bS6 (147 aa).

The tract at residues 96–147 (VTEPSPMMKAKEERFTKRDDREERSDRSEAPRAEAPAKAEAPAKAEDEAAAE) is disordered. Residues 104 to 147 (KAKEERFTKRDDREERSDRSEAPRAEAPAKAEAPAKAEDEAAAE) are compositionally biased toward basic and acidic residues.

Belongs to the bacterial ribosomal protein bS6 family.

Its function is as follows. Binds together with bS18 to 16S ribosomal RNA. The polypeptide is Small ribosomal subunit protein bS6 (Photobacterium profundum (strain SS9)).